We begin with the raw amino-acid sequence, 324 residues long: Cytochrome f (324 aa).

A signal peptide spans 1-30 (MNMRFSPKALVRQLGRLSLVACLSLGLLGA). Heme-binding residues include Y42, C62, C65, and H66. The chain crosses the membrane as a helical span at residues 290 to 310 (VLGVIAFFFAVMLAQIMLVLK).

This sequence belongs to the cytochrome f family. In terms of assembly, the 4 large subunits of the cytochrome b6-f complex are cytochrome b6, subunit IV (17 kDa polypeptide, PetD), cytochrome f and the Rieske protein, while the 4 small subunits are PetG, PetL, PetM and PetN. The complex functions as a dimer. The cofactor is heme.

It is found in the cellular thylakoid membrane. In terms of biological role, component of the cytochrome b6-f complex, which mediates electron transfer between photosystem II (PSII) and photosystem I (PSI), cyclic electron flow around PSI, and state transitions. This Synechococcus elongatus (strain ATCC 33912 / PCC 7942 / FACHB-805) (Anacystis nidulans R2) protein is Cytochrome f.